The following is a 149-amino-acid chain: Small ribosomal subunit protein uS13 (149 aa).

The protein belongs to the universal ribosomal protein uS13 family. As to quaternary structure, part of the 30S ribosomal subunit. Forms a loose heterodimer with protein S19. Forms two bridges to the 50S subunit in the 70S ribosome.

Its function is as follows. Located at the top of the head of the 30S subunit, it contacts several helices of the 16S rRNA. In the 70S ribosome it contacts the 23S rRNA (bridge B1a) and protein L5 of the 50S subunit (bridge B1b), connecting the 2 subunits; these bridges are implicated in subunit movement. The polypeptide is Small ribosomal subunit protein uS13 (Methanococcus maripaludis (strain DSM 14266 / JCM 13030 / NBRC 101832 / S2 / LL)).